A 190-amino-acid polypeptide reads, in one-letter code: uncharacterized protein (190 aa).

It to Synechocystis PCC 6803 sll1609 and slr1290.

This is an uncharacterized protein from Synechocystis sp. (strain ATCC 27184 / PCC 6803 / Kazusa).